The following is a 538-amino-acid chain: Putative amidase kk1C (538 aa).

Residues 1 to 32 are disordered; that stretch reads MTEPTWKTVASEKQQQRESKIPSEWQIPKSSH. Catalysis depends on charge relay system residues K134 and S209. S233 acts as the Acyl-ester intermediate in catalysis.

It belongs to the amidase family.

It carries out the reaction a monocarboxylic acid amide + H2O = a monocarboxylate + NH4(+). Its pathway is secondary metabolite biosynthesis. Functionally, putative amidase; part of the gene cluster that mediates the biosynthesis of KK-1, a novel cyclic depsipeptide with 10 residues which is a promising active compound with high activity against many plant pathogens, especially Botrytis cinerea. The role of kk1C in KK-1 biosynthesis has still to be determined. The nonribosomal peptide synthetase (NRPS) kk1B catalyzes the elongation and cyclization of the decapeptide chain composed of 1 D-lactic acid residue (D-Lac), 1 pipecolic acid residue (Pip), 1 aspartic acid residue (Asp), 1 isoleucine residue (Ile), 1 glycine residue (Gly), 1 tyrosine residue (Tyr) and 4 valine residues (Val). The Asp, Ile and 3 Val residues are N-methylated by the 5 methyltransferase domains from the NRPS (found in modules 3, 5, 6, 7 and 9), whereas the Tyr residue is O-methylated by the cluster encoded O-methyltransferase kk1A. The thioesterase kk1J is likely to be involved in the corrective mechanism of peptide chain synthesis. The D-lactate dehydrogenase kk1H is involved in the synthesis of D-lactic acid from pyruvic acid, which is recognized by the A domain of the first kk1B module. The pyrroline-5-carboxylate reductase kk1I is involved in the synthesis of the L-pipecolic acid residue of KK-1 from delta-1-pyrroline-5-carboxylate (P5C), a metabolic intermediate of lysine. It is still unclear how kk1C and kk1D are involved in the production of KK-1. The chain is Putative amidase kk1C from Curvularia clavata.